The chain runs to 491 residues: Acetyl-coenzyme A carboxylase carboxyl transferase subunit beta (491 aa).

The CoA carboxyltransferase N-terminal domain maps to leucine 132 to leucine 491. Zn(2+) is bound by residues cysteine 136, cysteine 139, cysteine 155, and cysteine 158. The segment at cysteine 136–cysteine 158 adopts a C4-type zinc-finger fold. The span at glutamate 252 to leucine 262 shows a compositional bias: basic and acidic residues. Disordered stretches follow at residues glutamate 252–arginine 273 and aspartate 279–aspartate 298. Positions serine 284 to aspartate 298 are enriched in acidic residues.

The protein belongs to the AccD/PCCB family. Acetyl-CoA carboxylase is a heterohexamer composed of biotin carboxyl carrier protein, biotin carboxylase and 2 subunits each of ACCase subunit alpha and ACCase plastid-coded subunit beta (accD). Zn(2+) is required as a cofactor.

It localises to the plastid. The enzyme catalyses N(6)-carboxybiotinyl-L-lysyl-[protein] + acetyl-CoA = N(6)-biotinyl-L-lysyl-[protein] + malonyl-CoA. Its pathway is lipid metabolism; malonyl-CoA biosynthesis; malonyl-CoA from acetyl-CoA: step 1/1. Its function is as follows. Component of the acetyl coenzyme A carboxylase (ACC) complex. Biotin carboxylase (BC) catalyzes the carboxylation of biotin on its carrier protein (BCCP) and then the CO(2) group is transferred by the transcarboxylase to acetyl-CoA to form malonyl-CoA. This chain is Acetyl-coenzyme A carboxylase carboxyl transferase subunit beta, found in Cuscuta gronovii (Common dodder).